Here is a 142-residue protein sequence, read N- to C-terminus: Non-specific lipid transfer protein GPI-anchored 34 (142 aa).

A signal peptide spans 1-22; sequence MAVAVTAVLFLAVVIAPQWTET. The tract at residues 21–43 is disordered; the sequence is ETKKPPRPSDTSDTSGTSGRDRR. The span at 29–38 shows a compositional bias: low complexity; the sequence is SDTSDTSGTS. Cystine bridges form between C46/C85, C57/C69, C70/C106, and C83/C114. N120 carries GPI-anchor amidated asparagine lipidation. The propeptide at 121–142 is removed in mature form; that stretch reads GGATKKIVASMGLFGVVASLFF.

This sequence belongs to the plant LTP family.

The protein resides in the cell membrane. Functionally, probable lipid transfer protein. The polypeptide is Non-specific lipid transfer protein GPI-anchored 34 (Arabidopsis thaliana (Mouse-ear cress)).